The chain runs to 158 residues: SsrA-binding protein (158 aa).

It belongs to the SmpB family.

It localises to the cytoplasm. In terms of biological role, required for rescue of stalled ribosomes mediated by trans-translation. Binds to transfer-messenger RNA (tmRNA), required for stable association of tmRNA with ribosomes. tmRNA and SmpB together mimic tRNA shape, replacing the anticodon stem-loop with SmpB. tmRNA is encoded by the ssrA gene; the 2 termini fold to resemble tRNA(Ala) and it encodes a 'tag peptide', a short internal open reading frame. During trans-translation Ala-aminoacylated tmRNA acts like a tRNA, entering the A-site of stalled ribosomes, displacing the stalled mRNA. The ribosome then switches to translate the ORF on the tmRNA; the nascent peptide is terminated with the 'tag peptide' encoded by the tmRNA and targeted for degradation. The ribosome is freed to recommence translation, which seems to be the essential function of trans-translation. This chain is SsrA-binding protein, found in Bifidobacterium longum (strain DJO10A).